Here is a 515-residue protein sequence, read N- to C-terminus: Forkhead box protein H1 (515 aa).

The interval Tyr55–Lys103 is disordered. Polar residues predominate over residues Pro73–Glu84. The fork-head DNA-binding region spans Lys110–Arg206. The tract at residues Tyr307 to Ser399 is disordered. Residues Ser322–Ser339 are compositionally biased toward low complexity. Positions Ser375–Pro388 are enriched in polar residues. The segment at Pro377 to Ser503 is SMAD-interaction domain (SID). Residues Leu402–Tyr406 carry the Fast/FoxH1 motif 1 (FM1) motif. A Fast/FoxH1 motif 2 (FM2) motif is present at residues Pro412–Pro418. Residues Leu467 to Pro488 carry the SMAD-interaction motif (SIM) motif.

ARF1 contains 2 smad2s, 1 smad4 and 1 foxh1/fast-1 protein. Interaction with smad4 is most likely indirect through interaction with the MH2 domain of smad2. Binds to the MH2 domain of smad3, which can incorporate into the ARF1 complex. The ARF1 and ARF2 complexes are activated by distinct TGF-beta family members; formation of ARF1 is promoted by activin. Interacts (via Fork-head domain) with gtf2ird1/wbscr11 (via repeats 4-5).

It localises to the nucleus. Its function is as follows. Transcriptional activator. Recognizes and binds to the DNA sequence 5'-TGT[GT][GT]ATT-3'. Upon TGF-beta induction, forms a transcriptionally active complex with smad2 and smad4 called activin-responsive factor 1 (ARF1), which binds a site on the mix-B/mix.2 promoter called the activin response element (ARE). Binds to activated smads and the ARE with much lower affinity than fast3. Necessary for the first steps in mesoderm specification, directly inducing mesodermal genes. Acts with fast3 to control the convergent extension movements of gastrulation. Binds to the proximal element (PE) of the gsc gene and cooperates with gtf2ird1/wbscr11 and SMAD proteins to regulate gsc transcription. In Xenopus tropicalis (Western clawed frog), this protein is Forkhead box protein H1.